A 540-amino-acid polypeptide reads, in one-letter code: [Co(II) methylated amine-specific corrinoid protein] reductase (540 aa).

4Fe-4S ferredoxin-type domains follow at residues Ile-471–Arg-500 and Arg-504–Leu-535. Positions 480, 483, 486, 490, 513, 518, 521, and 525 each coordinate [4Fe-4S] cluster.

Monomer. [4Fe-4S] cluster is required as a cofactor.

It catalyses the reaction 2 Co(II)-[methylamine-specific corrinoid protein] + AH2 + ATP + H2O = 2 Co(I)-[methylamine-specific corrinoid protein] + A + ADP + phosphate + 3 H(+). The enzyme catalyses 2 Co(II)-[dimethylamine-specific corrinoid protein] + AH2 + ATP + H2O = 2 Co(I)-[dimethylamine-specific corrinoid protein] + A + ADP + phosphate + 3 H(+). The catalysed reaction is 2 Co(II)-[trimethylamine-specific corrinoid protein] + AH2 + ATP + H2O = 2 Co(I)-[trimethylamine-specific corrinoid protein] + A + ADP + phosphate + 3 H(+). Its pathway is one-carbon metabolism; methanogenesis from methylamine. It participates in one-carbon metabolism; methanogenesis from dimethylamine. It functions in the pathway one-carbon metabolism; methanogenesis from trimethylamine. Functionally, reductase required for the activation of corrinoid-dependent methylamine methyltransferase reactions during methanogenesis. Mediates the ATP-dependent reduction of corrinoid proteins from the inactive cobalt(II) state to the active cobalt(I) state. Acts on the corrinoid proteins involved in methanogenesis from monomethylamine (MMA), dimethylamine (DMA) and trimethylamine (TMA), namely MtmC, MtbC and MttC, respectively. The sequence is that of [Co(II) methylated amine-specific corrinoid protein] reductase from Methanosarcina barkeri.